Here is a 1002-residue protein sequence, read N- to C-terminus: yemanuclein (1002 aa).

The Nuclear localization signal signature appears at 80 to 85; that stretch reads KKKTKK. Disordered regions lie at residues 193–358, 395–428, and 642–725; these read AIIK…KKVV, VSTD…GQEN, and KLKA…AKQV. The span at 207–217 shows a compositional bias: low complexity; that stretch reads SSSSESSSSSS. Residues 218-262 show a composition bias toward acidic residues; that stretch reads GDDDENDDGNNEEDDESDSEDDSEENDESDSEDDSESESLEDEDS. Tandem repeats lie at residues 230–241 and 242–253. A 2 X 12 AA tandem repeats region spans residues 230-253; sequence EDDESDSEDDSEENDESDSEDDSE. Low complexity-rich tracts occupy residues 286-320, 336-358, and 395-404; these read TGKS…RPST, QPSS…KKVV, and VSTDVSSSDS. Residues 408-427 are compositionally biased toward basic and acidic residues; it reads ESEHGRADRQAGQHGKDGQE. The span at 653-667 shows a compositional bias: low complexity; that stretch reads PASASPKPVGVVSAP. A compositionally biased stretch (basic and acidic residues) spans 679–689; sequence AVEDPRSRGNS. Ser-685 and Ser-689 each carry phosphoserine. Low complexity predominate over residues 690 to 701; sequence DTDSATSASSNS. Phosphoserine occurs at positions 885, 886, and 887. The interval 901–928 is disordered; that stretch reads SKPQKKVQSKPKNKTQNRGRSSLGAVGQ. Residues 903–917 are compositionally biased toward basic residues; sequence PQKKVQSKPKNKTQN.

In terms of processing, the N-terminus is blocked. In terms of tissue distribution, oocyte specific.

It is found in the nucleus. It localises to the nucleoplasm. The protein localises to the chromosome. The protein resides in the centromere. Its subcellular location is the kinetochore. May play a key role in egg organization. May be a transcriptional regulator having a role in chromatin remodeling in concert with Hira, a histone chaperone. Involved in chromosome segregation by affecting kinetochores function in the first meiotic division. The protein is yemanuclein of Drosophila melanogaster (Fruit fly).